A 283-amino-acid chain; its full sequence is Acetylglutamate kinase (283 aa).

Residues 64 to 65 (GG), Arg-86, and Asn-181 each bind substrate.

It belongs to the acetylglutamate kinase family. ArgB subfamily.

It is found in the cytoplasm. The enzyme catalyses N-acetyl-L-glutamate + ATP = N-acetyl-L-glutamyl 5-phosphate + ADP. The protein operates within amino-acid biosynthesis; L-arginine biosynthesis; N(2)-acetyl-L-ornithine from L-glutamate: step 2/4. Functionally, catalyzes the ATP-dependent phosphorylation of N-acetyl-L-glutamate. The chain is Acetylglutamate kinase from Sulfurimonas denitrificans (strain ATCC 33889 / DSM 1251) (Thiomicrospira denitrificans (strain ATCC 33889 / DSM 1251)).